The chain runs to 228 residues: MSQTPIELKGSSFTLSVVHLHDSQPEVIYQALQEKIEQAPAFLKNAPVVINVAALTAETDWIKLQQAISSTGLHVVGVSGCTDDALKKTIAQAGLPLLSEGKAQRRVVEPVAAVPAAVKTKVINTPVRSGQQIYARNCDLIVTSSVSAGAEVIADGNIHIYGMMRGRALAGVSGDVQSQIFCTHLAAELVSIAGRYWLSDQIPEPYFGQPARINLNQLDNVLTIKPLD.

It belongs to the MinC family. Interacts with MinD and FtsZ.

Cell division inhibitor that blocks the formation of polar Z ring septums. Rapidly oscillates between the poles of the cell to destabilize FtsZ filaments that have formed before they mature into polar Z rings. Prevents FtsZ polymerization. The chain is Probable septum site-determining protein MinC from Pectobacterium carotovorum subsp. carotovorum (strain PC1).